The following is a 1004-amino-acid chain: BLOC-2 complex member HPS3 (1004 aa).

A Clathrin-binding motif is present at residues 172 to 176 (LLDFE).

In terms of assembly, component of the biogenesis of lysosome-related organelles complex-2 (or BLOC2) composed of HPS3, HPS5 and HPS6. Interacts with HPS5. Interacts with HPS6. Widely expressed. Higher levels of expression are observed in kidney, liver and placenta.

It localises to the cytoplasm. The protein localises to the cytosol. Its function is as follows. Involved in early stages of melanosome biogenesis and maturation. The protein is BLOC-2 complex member HPS3 (HPS3) of Homo sapiens (Human).